We begin with the raw amino-acid sequence, 255 residues long: Small ribosomal subunit protein eS1B (255 aa).

An N-acetylalanine; partial modification is found at A2. Residue S245 is modified to Phosphoserine. K248 is covalently cross-linked (Glycyl lysine isopeptide (Lys-Gly) (interchain with G-Cter in ubiquitin)). T254 is modified (phosphothreonine).

The protein belongs to the eukaryotic ribosomal protein eS1 family. Component of the small ribosomal subunit. Mature ribosomes consist of a small (40S) and a large (60S) subunit. The 40S subunit contains about 33 different proteins and 1 molecule of RNA (18S). The 60S subunit contains about 49 different proteins and 3 molecules of RNA (25S, 5.8S and 5S).

The protein localises to the cytoplasm. The polypeptide is Small ribosomal subunit protein eS1B (Saccharomyces cerevisiae (strain RM11-1a) (Baker's yeast)).